The following is a 163-amino-acid chain: Cyclic pyranopterin monophosphate synthase (163 aa).

Substrate is bound by residues 78 to 80 (LCH) and 116 to 117 (ME). The active site involves Asp131.

Belongs to the MoaC family. As to quaternary structure, homohexamer; trimer of dimers.

The catalysed reaction is (8S)-3',8-cyclo-7,8-dihydroguanosine 5'-triphosphate = cyclic pyranopterin phosphate + diphosphate. The protein operates within cofactor biosynthesis; molybdopterin biosynthesis. In terms of biological role, catalyzes the conversion of (8S)-3',8-cyclo-7,8-dihydroguanosine 5'-triphosphate to cyclic pyranopterin monophosphate (cPMP). The polypeptide is Cyclic pyranopterin monophosphate synthase (Agrobacterium fabrum (strain C58 / ATCC 33970) (Agrobacterium tumefaciens (strain C58))).